Consider the following 142-residue polypeptide: uncharacterized protein (142 aa).

This is an uncharacterized protein from Caenorhabditis elegans.